The primary structure comprises 261 residues: Putative quercetin 2,3-dioxygenase Ta0133 (261 aa).

A divalent metal cation-binding residues include H17, H19, H61, and E63.

The protein belongs to the pirin family. Requires a divalent metal cation as cofactor.

It catalyses the reaction quercetin + O2 = 2-(3,4-dihydroxybenzoyloxy)-4,6-dihydroxybenzoate + CO. The protein operates within flavonoid metabolism; quercetin degradation. Putative quercetin 2,3-dioxygenase. This Thermoplasma acidophilum (strain ATCC 25905 / DSM 1728 / JCM 9062 / NBRC 15155 / AMRC-C165) protein is Putative quercetin 2,3-dioxygenase Ta0133.